The sequence spans 226 residues: PKHD-type hydroxylase Pfl01_0799 (226 aa).

In terms of domain architecture, Fe2OG dioxygenase spans 78–178; it reads KVFPPLLNCY…RYASFFWTQS (101 aa). Histidine 96, aspartate 98, and histidine 159 together coordinate Fe cation. Residue arginine 169 coordinates 2-oxoglutarate.

The cofactor is Fe(2+). L-ascorbate serves as cofactor.

In Pseudomonas fluorescens (strain Pf0-1), this protein is PKHD-type hydroxylase Pfl01_0799.